The primary structure comprises 224 residues: 7-cyano-7-deazaguanine synthase (224 aa).

Residue 8 to 18 participates in ATP binding; sequence LSGGMDSAAVI. Positions 186, 196, 199, and 202 each coordinate Zn(2+).

It belongs to the QueC family. The cofactor is Zn(2+).

The catalysed reaction is 7-carboxy-7-deazaguanine + NH4(+) + ATP = 7-cyano-7-deazaguanine + ADP + phosphate + H2O + H(+). It functions in the pathway purine metabolism; 7-cyano-7-deazaguanine biosynthesis. Catalyzes the ATP-dependent conversion of 7-carboxy-7-deazaguanine (CDG) to 7-cyano-7-deazaguanine (preQ(0)). The sequence is that of 7-cyano-7-deazaguanine synthase from Xanthomonas campestris pv. campestris (strain 8004).